The sequence spans 1077 residues: Ubiquitin-activating enzyme E1 2 (1077 aa).

Residues 16–36 form a disordered region; the sequence is SPMKKRRIDHTESADGSAINA. Residues Ala499, Asp525, Arg536, Lys549, and 597–598 contribute to the ATP site; that span reads DN. Cys653 functions as the Glycyl thioester intermediate in the catalytic mechanism.

It belongs to the ubiquitin-activating E1 family. In terms of assembly, monomer. In terms of tissue distribution, expressed in leaves, flowers, roots and stems. Detected in germinating seeds, cotyledons, hypocotyls, vascular tissues, anthers, filaments, pollen, style, stigma, sepals, petals, ovary, developing ovules, funiculi and silique walls.

It carries out the reaction ATP + ubiquitin + [E1 ubiquitin-activating enzyme]-L-cysteine = AMP + diphosphate + S-ubiquitinyl-[E1 ubiquitin-activating enzyme]-L-cysteine.. Its pathway is protein modification; protein ubiquitination. Activates ubiquitin by first adenylating its C-terminal glycine residue with ATP, and thereafter linking this residue to the side chain of a cysteine residue in E1, yielding a ubiquitin-E1 thioester and free AMP. The polypeptide is Ubiquitin-activating enzyme E1 2 (UBA2) (Arabidopsis thaliana (Mouse-ear cress)).